The sequence spans 194 residues: Putative manganese efflux pump MntP (194 aa).

6 helical membrane passes run 2–22 (ISII…AFAV), 43–63 (LWFG…ASTF), 67–87 (VTQF…GNMV), 111–131 (PLAV…AFMF), 137–157 (AFAI…GLHI), and 174–194 (GVVL…VIAF).

Belongs to the MntP (TC 9.B.29) family.

The protein resides in the cell membrane. Probably functions as a manganese efflux pump. The polypeptide is Putative manganese efflux pump MntP (Bifidobacterium longum (strain DJO10A)).